Consider the following 590-residue polypeptide: Aspartate--tRNA ligase (590 aa).

An L-aspartate-binding site is contributed by Glu-174. Residues 198–201 (QLMK) are aspartate. Arg-220 is an L-aspartate binding site. Residues 220 to 222 (RDE) and Gln-229 each bind ATP. His-443 contacts L-aspartate. ATP is bound at residue Glu-484. L-aspartate is bound at residue Arg-491. 536-539 (GLDR) serves as a coordination point for ATP.

The protein belongs to the class-II aminoacyl-tRNA synthetase family. Type 1 subfamily. Homodimer.

It localises to the cytoplasm. It carries out the reaction tRNA(Asp) + L-aspartate + ATP = L-aspartyl-tRNA(Asp) + AMP + diphosphate. In terms of biological role, catalyzes the attachment of L-aspartate to tRNA(Asp) in a two-step reaction: L-aspartate is first activated by ATP to form Asp-AMP and then transferred to the acceptor end of tRNA(Asp). The protein is Aspartate--tRNA ligase of Lactococcus lactis subsp. cremoris (strain SK11).